The following is a 292-amino-acid chain: Cyclin-dependent kinase A-2 (292 aa).

Residues 4-286 form the Protein kinase domain; the sequence is YEKVEKIGEG…ARAALEHEYF (283 aa). ATP-binding positions include 10–18 and lysine 33; that span reads IGEGTYGVV. The residue at position 14 (threonine 14) is a Phosphothreonine. At tyrosine 15 the chain carries Phosphotyrosine. Catalysis depends on aspartate 126, which acts as the Proton acceptor. Threonine 160 carries the phosphothreonine modification.

This sequence belongs to the protein kinase superfamily. CMGC Ser/Thr protein kinase family. CDC2/CDKX subfamily. As to expression, expressed in the dividing region of the root apex and in differentiated cells such as those in the sclerenchyma, pericycle and parenchyma of the central cylinder. Expressed in the intercalary meristem and the elongation zone of internodes.

It catalyses the reaction L-seryl-[protein] + ATP = O-phospho-L-seryl-[protein] + ADP + H(+). The enzyme catalyses L-threonyl-[protein] + ATP = O-phospho-L-threonyl-[protein] + ADP + H(+). It carries out the reaction [DNA-directed RNA polymerase] + ATP = phospho-[DNA-directed RNA polymerase] + ADP + H(+). The polypeptide is Cyclin-dependent kinase A-2 (CDKA-2) (Oryza sativa subsp. japonica (Rice)).